We begin with the raw amino-acid sequence, 331 residues long: Small ribosomal subunit protein uS2 (331 aa).

This sequence belongs to the universal ribosomal protein uS2 family.

This chain is Small ribosomal subunit protein uS2, found in Rhodopseudomonas palustris (strain ATCC BAA-98 / CGA009).